The chain runs to 2346 residues: Myomegalin (2346 aa).

Coiled-coil stretches lie at residues 41–132 (REDI…LVEA), 162–205 (DQYT…LLEE), 238–318 (DSHL…REML), and 350–684 (CSQL…RQYL). The residue at position 252 (Glu-252) is a Phosphoserine. Residues 698–732 (NQQAEVTPTGRLGKQTDQGSMQIPSRDDSTSLTAK) are disordered. Thr-704 is modified (phosphothreonine). Residues 722 to 732 (SRDDSTSLTAK) show a composition bias toward basic and acidic residues. Coiled-coil stretches lie at residues 743-936 (GDLD…TLAA), 1002-1043 (LQEE…SSVS), 1096-1124 (SSLQ…EQLV), 1212-1240 (STQH…SEAT), 1346-1385 (GKSE…LSVT), and 1431-1455 (GLQA…LPKN). Residues 1193–1214 (DNQSQPRDPGPQSAFSLPGSTQ) are disordered. Positions 1205–1214 (SAFSLPGSTQ) are enriched in polar residues. The Olduvai domain maps to 1551–1642 (KDHKSEKDQA…EEKKASPSHS (92 aa)). The span at 1591–1600 (SLTPSSSHAL) shows a compositional bias: low complexity. Disordered stretches follow at residues 1591–1614 (SLTP…SFLS) and 1633–1690 (EEKK…EANQ). The span at 1652–1690 (AVLSSKPSSTSASQGAKAESNSNPISLPTPQNTPKEANQ) shows a compositional bias: polar residues. Coiled coils occupy residues 1736–1760 (VVSL…ASTV) and 1840–2077 (GADL…QQLE). Disordered regions lie at residues 2081–2103 (GKAS…PGNK) and 2127–2156 (VFPS…TSPV). Residues 2085–2103 (LSPSSINQNFPASTDPGNK) show a composition bias toward polar residues. The stretch at 2273-2312 (ESTERELLELRTKVSKQERLLQSTTEHLKNANQQKESMEQ) forms a coiled coil.

Interacts with PDE4D. Isoform 13 interacts with MAPRE1 and MAPRE3. Isoform 13 forms a pericentrosomal complex with AKAP9, CDK5RAP2 and EB1/MAPRE1; within this complex, may mediate MAPRE1-binding to CDK5RAP2. Interaction of isoform 13 with AKAP9 stabilizes both proteins. Isoform 13 interacts (via N-terminus) with CAMSAP2; this interaction is much stronger in the presence of AKAP9. In complex with AKAP9, Isoform 13 recruits CAMSAP2 to the Golgi apparatus. Isoform 13 interacts with unglycosylated LGALS3BP; this interaction may connect the pericentrosomal complex to the gamma-tubulin ring complex (gamma-TuRC) to promote microtubule assembly and acetylation. In terms of tissue distribution, highly expressed in adult and fetal heart, in skeletal muscle and, to a lower extent, in brain and placenta.

It localises to the golgi apparatus. It is found in the cytoplasm. The protein resides in the cytoskeleton. Its subcellular location is the microtubule organizing center. The protein localises to the centrosome. In terms of biological role, functions as an anchor sequestering components of the cAMP-dependent pathway to Golgi and/or centrosomes. Its function is as follows. Participates in microtubule dynamics, promoting microtubule assembly. Depending upon the cell context, may act at the level of the Golgi apparatus or that of the centrosome. In complex with AKAP9, recruits CAMSAP2 to the Golgi apparatus and tethers non-centrosomal minus-end microtubules to the Golgi, an important step for polarized cell movement. In complex with AKAP9, EB1/MAPRE1 and CDK5RAP2, contributes to microtubules nucleation and extension from the centrosome to the cell periphery, a crucial process for directed cell migration, mitotic spindle orientation and cell-cycle progression. The sequence is that of Myomegalin (PDE4DIP) from Homo sapiens (Human).